Reading from the N-terminus, the 131-residue chain is ATP synthase epsilon chain (131 aa).

It belongs to the ATPase epsilon chain family. In terms of assembly, F-type ATPases have 2 components, CF(1) - the catalytic core - and CF(0) - the membrane proton channel. CF(1) has five subunits: alpha(3), beta(3), gamma(1), delta(1), epsilon(1). CF(0) has three main subunits: a, b and c.

Its subcellular location is the cell inner membrane. Functionally, produces ATP from ADP in the presence of a proton gradient across the membrane. In Wolinella succinogenes (strain ATCC 29543 / DSM 1740 / CCUG 13145 / JCM 31913 / LMG 7466 / NCTC 11488 / FDC 602W) (Vibrio succinogenes), this protein is ATP synthase epsilon chain.